Reading from the N-terminus, the 431-residue chain is Enolase (431 aa).

Q166 provides a ligand contact to (2R)-2-phosphoglycerate. E208 functions as the Proton donor in the catalytic mechanism. Residues D245, E288, and D315 each coordinate Mg(2+). (2R)-2-phosphoglycerate-binding residues include K340, R369, S370, and K391. K340 (proton acceptor) is an active-site residue.

The protein belongs to the enolase family. The cofactor is Mg(2+).

It localises to the cytoplasm. Its subcellular location is the secreted. The protein localises to the cell surface. It catalyses the reaction (2R)-2-phosphoglycerate = phosphoenolpyruvate + H2O. It participates in carbohydrate degradation; glycolysis; pyruvate from D-glyceraldehyde 3-phosphate: step 4/5. Its function is as follows. Catalyzes the reversible conversion of 2-phosphoglycerate (2-PG) into phosphoenolpyruvate (PEP). It is essential for the degradation of carbohydrates via glycolysis. The sequence is that of Enolase from Clostridium botulinum (strain ATCC 19397 / Type A).